A 342-amino-acid polypeptide reads, in one-letter code: Histidinol-phosphate aminotransferase 2 (342 aa).

Residue Lys206 is modified to N6-(pyridoxal phosphate)lysine.

The protein belongs to the class-II pyridoxal-phosphate-dependent aminotransferase family. Histidinol-phosphate aminotransferase subfamily. Requires pyridoxal 5'-phosphate as cofactor.

The enzyme catalyses L-histidinol phosphate + 2-oxoglutarate = 3-(imidazol-4-yl)-2-oxopropyl phosphate + L-glutamate. It functions in the pathway amino-acid biosynthesis; L-histidine biosynthesis; L-histidine from 5-phospho-alpha-D-ribose 1-diphosphate: step 7/9. The chain is Histidinol-phosphate aminotransferase 2 (hisC2) from Archaeoglobus fulgidus (strain ATCC 49558 / DSM 4304 / JCM 9628 / NBRC 100126 / VC-16).